The primary structure comprises 231 residues: Ribonuclease 3 (231 aa).

The 129-residue stretch at 7-135 folds into the RNase III domain; sequence IQAIESKLNF…ILGAVYLDGG (129 aa). Glu48 lines the Mg(2+) pocket. Asp52 is a catalytic residue. Residues Asn121 and Glu124 each coordinate Mg(2+). Residue Glu124 is part of the active site. One can recognise a DRBM domain in the interval 160-229; sequence NPKNRLQQFT…AKQALSTHDN (70 aa).

Belongs to the ribonuclease III family. As to quaternary structure, homodimer. Requires Mg(2+) as cofactor.

The protein resides in the cytoplasm. It carries out the reaction Endonucleolytic cleavage to 5'-phosphomonoester.. Functionally, digests double-stranded RNA. Involved in the processing of primary rRNA transcript to yield the immediate precursors to the large and small rRNAs (23S and 16S). Processes some mRNAs, and tRNAs when they are encoded in the rRNA operon. Processes pre-crRNA and tracrRNA of type II CRISPR loci if present in the organism. The chain is Ribonuclease 3 from Chlamydia trachomatis serovar A (strain ATCC VR-571B / DSM 19440 / HAR-13).